The following is a 1639-amino-acid chain: RIMS-binding protein 3B (1639 aa).

3 disordered regions span residues 1 to 22 (MAKDSPSPLGASPKKPGCSSPA), 215 to 240 (GSPDPQAVHSLEEPLPQTSSGSCHAP), and 295 to 364 (SLDS…LTPS). Positions 21–143 (PAAAVLENQR…ELQRQLAEEL (123 aa)) form a coiled coil. A compositionally biased stretch (pro residues) spans 326–339 (SPPPSPLPPPPPPS). Coiled coils occupy residues 409 to 442 (QADEKVKRLKVKRAELTGLARRLADRARELQETN) and 480 to 619 (LAKD…AEEN). The tract at residues 697 to 811 (CRPGHPPEQP…DRDTASEVDD (115 aa)) is disordered. Composition is skewed to polar residues over residues 707 to 718 (WETSQMPESQVK) and 761 to 775 (SVPQVSETVPASQPL). Low complexity predominate over residues 776–790 (SKKTSSQSNSSSEGS). Residues 832–899 (PKLKIFMAQY…PSNFVEQIPD (68 aa)) enclose the SH3 1 domain. 2 Fibronectin type-III domains span residues 995–1083 (APMQ…TLLA) and 1088–1184 (PPLE…IPED). 3 disordered regions span residues 1251–1273 (PRRQSPVSNLGSEGECPSSGAGS), 1292–1325 (QKSPQNHRPPSVSDQPGEKENCYQHMGTSKSPAP), and 1392–1413 (GTERREERREPEPHSRQGQALG). The segment covering 1293 to 1305 (KSPQNHRPPSVSD) has biased composition (polar residues). A compositionally biased stretch (basic and acidic residues) spans 1392–1406 (GTERREERREPEPHS). SH3 domains are found at residues 1452 to 1520 (TPAR…EMEV) and 1569 to 1636 (WTPK…HMSL).

Belongs to the RIMBP family. In terms of assembly, interacts with LRGUK (via guanylate kinase-like domain). Interacts (via C-terminus) with HOOK1 (via coiled-coil region).

The protein resides in the cytoplasm. The protein localises to the cytoskeleton. Probable component of the manchette, a microtubule-based structure which plays a key role in sperm head morphogenesis during late stages of sperm development. The sequence is that of RIMS-binding protein 3B (RIMBP3B) from Homo sapiens (Human).